A 297-amino-acid polypeptide reads, in one-letter code: Vesicular-fusion protein SEC17 (297 aa).

The protein belongs to the SNAP family.

The protein resides in the membrane. Functionally, required for vesicular transport between the endoplasmic reticulum and the Golgi apparatus. This Komagataella phaffii (strain GS115 / ATCC 20864) (Yeast) protein is Vesicular-fusion protein SEC17 (SEC17).